Reading from the N-terminus, the 70-residue chain is Large ribosomal subunit protein eL38 (70 aa).

Belongs to the eukaryotic ribosomal protein eL38 family.

This is Large ribosomal subunit protein eL38 (RpL38) from Spodoptera frugiperda (Fall armyworm).